Here is a 150-residue protein sequence, read N- to C-terminus: SLASAAYDQGRLAAQAIIKGDASAHLIEDIPTGIYTIPEISSVGKTEQELTAMKVPYEVGRAQFKHLARAQIVGMNVGSLKILFHRETKQILGIHCFGERAAEIIHIGQAIMEQKGEGNTIEYFVNTTFNYPTMAEAYRVAALNGLNRLF.

The protein belongs to the class-I pyridine nucleotide-disulfide oxidoreductase family. It depends on FAD as a cofactor.

The protein localises to the cytoplasm. It carries out the reaction NAD(+) + NADPH = NADH + NADP(+). Functionally, conversion of NADPH, generated by peripheral catabolic pathways, to NADH, which can enter the respiratory chain for energy generation. The polypeptide is Soluble pyridine nucleotide transhydrogenase (sthA) (Pectobacterium carotovorum subsp. carotovorum (Erwinia carotovora subsp. carotovora)).